A 133-amino-acid chain; its full sequence is Acyl-CoA thioester hydrolase YciA (133 aa).

The 116-residue stretch at 8 to 123 (PQGELVLRTL…LFIYVAVDPD (116 aa)) folds into the HotDog ACOT-type domain.

Belongs to the acyl coenzyme A hydrolase family.

In terms of biological role, catalyzes the hydrolysis of the thioester bond in palmitoyl-CoA and malonyl-CoA. The chain is Acyl-CoA thioester hydrolase YciA (yciA) from Salmonella typhi.